The chain runs to 517 residues: Putative thymidine phosphorylase (517 aa).

It belongs to the thymidine/pyrimidine-nucleoside phosphorylase family. Type 2 subfamily.

The enzyme catalyses thymidine + phosphate = 2-deoxy-alpha-D-ribose 1-phosphate + thymine. This is Putative thymidine phosphorylase from Legionella pneumophila subsp. pneumophila (strain Philadelphia 1 / ATCC 33152 / DSM 7513).